Consider the following 88-residue polypeptide: Cell division topological specificity factor (88 aa).

The protein belongs to the MinE family.

Prevents the cell division inhibition by proteins MinC and MinD at internal division sites while permitting inhibition at polar sites. This ensures cell division at the proper site by restricting the formation of a division septum at the midpoint of the long axis of the cell. The protein is Cell division topological specificity factor of Escherichia coli (strain SMS-3-5 / SECEC).